The sequence spans 136 residues: Ig kappa chain V-V region MOPC 21 (136 aa).

Residues Met-1 to Gly-29 form the signal peptide. The interval Asn-30–Cys-52 is framework-1. Residues Lys-53–Ser-63 form a complementarity-determining-1 region. The tract at residues Trp-64 to Tyr-78 is framework-2. Residues Gly-79 to Thr-85 form a complementarity-determining-2 region. Residues Gly-86–Cys-117 form a framework-3 region. Residues Gly-118–Thr-126 are complementarity-determining-3. The interval Phe-127–Lys-136 is framework-4.

This is Ig kappa chain V-V region MOPC 21 from Mus musculus (Mouse).